Reading from the N-terminus, the 244-residue chain is Lipoprotein-releasing system ATP-binding protein LolD (244 aa).

An ABC transporter domain is found at 19-244 (IRAEALAKTY…KLRELAPSAV (226 aa)). 55–62 (GASGAGKS) is an ATP binding site.

This sequence belongs to the ABC transporter superfamily. Lipoprotein translocase (TC 3.A.1.125) family. In terms of assembly, the complex is composed of two ATP-binding proteins (LolD) and two transmembrane proteins (LolC and LolE).

Its subcellular location is the cell inner membrane. Functionally, part of the ABC transporter complex LolCDE involved in the translocation of mature outer membrane-directed lipoproteins, from the inner membrane to the periplasmic chaperone, LolA. Responsible for the formation of the LolA-lipoprotein complex in an ATP-dependent manner. This chain is Lipoprotein-releasing system ATP-binding protein LolD, found in Xanthomonas axonopodis pv. citri (strain 306).